Reading from the N-terminus, the 116-residue chain is Large ribosomal subunit protein uL18 (116 aa).

It belongs to the universal ribosomal protein uL18 family. As to quaternary structure, part of the 50S ribosomal subunit; part of the 5S rRNA/L5/L18/L25 subcomplex. Contacts the 5S and 23S rRNAs.

In terms of biological role, this is one of the proteins that bind and probably mediate the attachment of the 5S RNA into the large ribosomal subunit, where it forms part of the central protuberance. This Saccharophagus degradans (strain 2-40 / ATCC 43961 / DSM 17024) protein is Large ribosomal subunit protein uL18.